A 184-amino-acid chain; its full sequence is Type-1 fimbrial protein, A chain (184 aa).

An N-terminal signal peptide occupies residues 1–23 (MKIKTLAIVVLSALSLSSTAALA). An intrachain disulfide couples Cys46 to Cys86.

Belongs to the fimbrial protein family.

It localises to the fimbrium. Fimbriae (also called pili), polar filaments radiating from the surface of the bacterium to a length of 0.5-1.5 micrometers and numbering 100-300 per cell, enable bacteria to colonize the epithelium of specific host organs. In Escherichia coli, this protein is Type-1 fimbrial protein, A chain.